Here is a 517-residue protein sequence, read N- to C-terminus: Cytochrome P450 monooxygenase sdnE (517 aa).

A helical membrane pass occupies residues 4 to 24; that stretch reads SSILQTLAVLYVLYLLGLIIY. N111 carries N-linked (GlcNAc...) asparagine glycosylation. A helical transmembrane segment spans residues 219 to 239; the sequence is FPVVFIILGLSPRAMLKLVVP. C456 provides a ligand contact to heme.

Belongs to the cytochrome P450 family. Requires heme as cofactor.

The protein localises to the membrane. It functions in the pathway antibiotic biosynthesis. Cytochrome P450 monooxygenase; part of the gene cluster that mediates the biosynthesis of sordarin and hypoxysordarin, glycoside antibiotics with a unique tetracyclic diterpene aglycone structure. First, the geranylgeranyl diphosphate synthase sdnC constructs GGDP from farnesyl diphosphate and isopentenyl diphosphate. The diterpene cyclase sdnA then catalyzes the cyclization of GGDP to afford cycloaraneosene. Cycloaraneosene is then hydroxylated four times by the putative cytochrome P450 monooxygenases sdnB, sdnE, sdnF and sdnH to give a hydroxylated cycloaraneosene derivative such as cycloaraneosene-8,9,13,19-tetraol. Although the order of the hydroxylations is unclear, at least C8, C9 and C13 of the cycloaraneosene skeleton are hydroxylated before the sordaricin formation. Dehydration of the 13-hydroxy group of the hydroxylated cycloaraneosene derivative might be catalyzed by an unassigned hypothetical protein such as sdnG and sdnP to construct the cyclopentadiene moiety. The FAD-dependent oxidoreductase sdnN is proposed to catalyze the oxidation at C9 of the hydroxylated cycloaraneosene derivative and also catalyze the Baeyer-Villiger oxidation to give the lactone intermediate. The presumed lactone intermediate would be hydrolyzed to give an acrolein moiety and a carboxylate moiety. Then, [4+2]cycloaddition would occur between the acrolein moiety and the cyclopentadiene moiety to give sordaricin. SdnN might also be involved in the [4+2]cycloaddition after the hypothesized oxidation to accommodate the oxidized product and prompt the [4+2]cycloaddition. GDP-6-deoxy-D-altrose may be biosynthesized from GDP-D-mannose by the putative GDP-mannose-4,6-dehydratase sdnI and the short-chain dehydrogenase sdnK. The glycosyltransferase sdnJ catalyzes the attachment of 6-deoxy-D-altrose onto the 19-hydroxy group of sordaricin to give 4'-O-demethylsordarin. The methyltransferase sdnD would complete the biosynthesis of sordarin. Sordarin can be further modified into hypoxysordarin. The unique acyl chain at the 3'-hydroxy group of hypoxysordarin would be constructed by an iterative type I PKS sdnO and the trans-acting polyketide methyltransferase sdnL. SdnL would be responsible for the introduction of an alpha-methyl group of the polyketide chain. Alternatively, the beta-lactamase-like protein sdnR might be responsible for the cleavage and transfer of the polyketide chain from the PKS sdnO to sordarin. Two putative cytochrome P450 monooxygenases, sdnQ and sdnT, might catalyze the epoxidations of the polyketide chain to complete the biosynthesis of hypoxysordarin. Transcriptional regulators sdnM and sdnS are presumably encoded for the transcriptional regulation of the expression of the sdn gene cluster. The polypeptide is Cytochrome P450 monooxygenase sdnE (Sordaria araneosa (Pleurage araneosa)).